The primary structure comprises 178 residues: Cytochrome b6-f complex iron-sulfur subunit (178 aa).

Residues 20–42 form a helical membrane-spanning segment; that stretch reads LLTFGTATGVALGALYPVANYFM. In terms of domain architecture, Rieske spans 65 to 161; that stretch reads KTGWLASHQA…VDVDDDAVLV (97 aa). [2Fe-2S] cluster is bound by residues cysteine 107, histidine 109, cysteine 125, and histidine 128. A disulfide bond links cysteine 112 and cysteine 127.

The protein belongs to the Rieske iron-sulfur protein family. The 4 large subunits of the cytochrome b6-f complex are cytochrome b6, subunit IV (17 kDa polypeptide, PetD), cytochrome f and the Rieske protein, while the 4 small subunits are PetG, PetL, PetM and PetN. The complex functions as a dimer. [2Fe-2S] cluster serves as cofactor.

It localises to the cellular thylakoid membrane. The enzyme catalyses 2 oxidized [plastocyanin] + a plastoquinol + 2 H(+)(in) = 2 reduced [plastocyanin] + a plastoquinone + 4 H(+)(out). Its function is as follows. Component of the cytochrome b6-f complex, which mediates electron transfer between photosystem II (PSII) and photosystem I (PSI), cyclic electron flow around PSI, and state transitions. This Prochlorococcus marinus subsp. pastoris (strain CCMP1986 / NIES-2087 / MED4) protein is Cytochrome b6-f complex iron-sulfur subunit.